The following is a 419-amino-acid chain: Probable glycosidase C21B10.07 (419 aa).

2 disordered regions span residues 1 to 20 (MGIP…AALS) and 29 to 67 (DPAR…NNEN). Positions 30 to 59 (PARKNESTNDVIDNHTDTEIDDHDNDHENL) are enriched in basic and acidic residues. Residues 88–108 (FIWILIFIVALICSVLIGVLG) form a helical membrane-spanning segment. Positions 122-387 (PSYKAKTYSL…WAGSSVYSSA (266 aa)) constitute a GH16 domain. Glutamate 237 acts as the Nucleophile in catalysis. The active-site Proton donor is glutamate 242.

Belongs to the glycosyl hydrolase 16 family.

The protein resides in the membrane. The polypeptide is Probable glycosidase C21B10.07 (Schizosaccharomyces pombe (strain 972 / ATCC 24843) (Fission yeast)).